The chain runs to 378 residues: Transmembrane 6 superfamily member 2 (378 aa).

Helical transmembrane passes span 34-54 (LCVV…VYSL), 63-83 (PLYA…VIAL), 110-130 (IFIC…MAGA), 140-160 (LGLY…PGNI), 170-190 (PTFF…MRIF), 219-239 (LTLI…GLVV), 269-289 (MLMY…ALTF), 291-311 (GCSW…QAQF), and 332-352 (TWAT…LLAL). EXPERA domains lie at 61–186 (YDPL…CWAG) and 217–351 (ADLT…HLLA).

Belongs to the TM6SF family.

The protein resides in the endoplasmic reticulum membrane. Its subcellular location is the endoplasmic reticulum-Golgi intermediate compartment membrane. Functionally, regulator of liver fat metabolism influencing triglyceride secretion and hepatic lipid droplet content. May function as sterol isomerase. This is Transmembrane 6 superfamily member 2 (Tm6sf2) from Rattus norvegicus (Rat).